The following is a 460-amino-acid chain: Ammonium transporter Rh type B-B (460 aa).

Residues M1–I10 lie on the Cytoplasmic side of the membrane. A helical transmembrane segment spans residues K11–V31. Topologically, residues R32–Y62 are extracellular. N-linked (GlcNAc...) asparagine glycosylation occurs at N48. A helical membrane pass occupies residues P63–L83. Topologically, residues K84–G87 are cytoplasmic. A helical membrane pass occupies residues F88–I108. The Extracellular segment spans residues Q109–E125. The helical transmembrane segment at S126–G146 threads the bilayer. Residues K147–P150 lie on the Cytoplasmic side of the membrane. A helical membrane pass occupies residues V151–I171. The Extracellular portion of the chain corresponds to L172 to D179. The helical transmembrane segment at A180–Y202 threads the bilayer. Residues R203 to D220 lie on the Cytoplasmic side of the membrane. The helical transmembrane segment at L221 to V241 threads the bilayer. The Extracellular segment spans residues T242–V252. Residues M253 to L273 traverse the membrane as a helical segment. At N274–H283 the chain is on the cytoplasmic side. A helical membrane pass occupies residues I284–T304. A topological domain (extracellular) is located at residue P305. A helical transmembrane segment spans residues F306–L326. Topologically, residues T327–G347 are cytoplasmic. Residues M348–I368 traverse the membrane as a helical segment. At Y369–Q394 the chain is on the extracellular side. A helical transmembrane segment spans residues F395 to I415. Topologically, residues L416 to A460 are cytoplasmic.

It belongs to the ammonium transporter (TC 2.A.49) family. Rh subfamily.

It is found in the basolateral cell membrane. The protein localises to the cytoplasmic vesicle membrane. In terms of biological role, functions as a specific ammonium transporter. The sequence is that of Ammonium transporter Rh type B-B (rhbg-b) from Xenopus laevis (African clawed frog).